The primary structure comprises 173 residues: MTYFVLFLGLCFVLGGLAVASKPSPYYGVVGLVLASVAGCGWLLSLGVSFVSLVLFMVYLGGMLVVFVYSVSLAADPFPEAWGDLGVVGYGVGFVMVLMVGMVVGGFVGSLDFGVVTVDSVGMFSVRLDFSGVAMFYSCGVGMFLVAGWGLLLTLFVVLELVRGLSRGAIRAV.

5 consecutive transmembrane segments (helical) span residues 1-21, 27-47, 48-68, 87-107, and 139-159; these read MTYF…AVAS, YGVV…LSLG, VSFV…VVFV, VVGY…VGGF, and CGVG…FVVL.

It belongs to the complex I subunit 6 family.

The protein localises to the mitochondrion membrane. It catalyses the reaction a ubiquinone + NADH + 5 H(+)(in) = a ubiquinol + NAD(+) + 4 H(+)(out). Its function is as follows. Core subunit of the mitochondrial membrane respiratory chain NADH dehydrogenase (Complex I) that is believed to belong to the minimal assembly required for catalysis. Complex I functions in the transfer of electrons from NADH to the respiratory chain. The immediate electron acceptor for the enzyme is believed to be ubiquinone. This is NADH-ubiquinone oxidoreductase chain 6 (MT-ND6) from Aethia pusilla (Least auklet).